Here is a 180-residue protein sequence, read N- to C-terminus: Stathmin-3 (180 aa).

S-palmitoyl cysteine attachment occurs at residues Cys-22 and Cys-24. In terms of domain architecture, SLD spans 38 to 180 (GDMEVKQLDK…NKEQREEMSG (143 aa)). Ser-50, Ser-60, Ser-65, Ser-68, Ser-72, Ser-73, and Ser-81 each carry phosphoserine. Residues 58-81 (LKSPSDLSPESPVLSSPPKRKDAS) form a disordered region. Over residues 60 to 74 (SPSDLSPESPVLSSP) the composition is skewed to low complexity. A coiled-coil region spans residues 75-179 (PKRKDASLEE…RNKEQREEMS (105 aa)).

The protein belongs to the stathmin family. As to quaternary structure, interacts with STAT3. Interacts with CLU (secreted form); this interaction may act as an important modulator during neuronal differentiation. In terms of processing, N-terminal palmitoylation promotes specific anchoring to the cytosolic leaflet of Golgi membranes and subsequent vesicular trafficking along dendrites and axons. Neuronal Stathmins are substrates for palmitoyltransferases ZDHHC3, ZDHHC7 and ZDHHC15. As to expression, neuron specific.

The protein resides in the golgi apparatus. It localises to the cell projection. Its subcellular location is the growth cone. It is found in the axon. The protein localises to the cytoplasm. The protein resides in the cytosol. Its function is as follows. Exhibits microtubule-destabilizing activity, which is antagonized by STAT3. This is Stathmin-3 (Stmn3) from Rattus norvegicus (Rat).